The sequence spans 878 residues: Multiple RNA-binding domain-containing protein 1 (878 aa).

The RRM 1 domain occupies 2 to 90 (SRVIVKGLPI…SKIEVSMAKS (89 aa)). Disordered stretches follow at residues 118-143 (LLAD…KHDI), 159-269 (TMKP…AKDE), and 287-323 (GADT…EKSL). Residues 159–177 (TMKPSSQVTSWETVQSSKT) show a composition bias toward polar residues. Positions 180-190 (EDEEAADDEVG) are enriched in acidic residues. Residues 295–304 (QQQQPDTEQQ) are compositionally biased toward low complexity. Positions 305–319 (QPEETEVETSQESEE) are enriched in acidic residues. 4 consecutive RRM domains span residues 330–408 (GRLF…PADA), 516–588 (RVIL…KGPS), 651–734 (VSIF…LSHR), and 752–829 (GKII…FVEQ). The interval 732–751 (SHRQGTSTTNASSKKKKKNQ) is disordered. The segment at 852–878 (TKIANMRNSGKRKIDLDEDDENDGLQG) is disordered. Over residues 867–878 (LDEDDENDGLQG) the composition is skewed to acidic residues.

The protein belongs to the RRM MRD1 family.

The protein resides in the nucleus. Involved in pre-rRNA processing. This Kluyveromyces lactis (strain ATCC 8585 / CBS 2359 / DSM 70799 / NBRC 1267 / NRRL Y-1140 / WM37) (Yeast) protein is Multiple RNA-binding domain-containing protein 1 (MRD1).